A 177-amino-acid chain; its full sequence is Preprotein translocase subunit SECE1 (177 aa).

The N-terminal 38 residues, 1–38 (MSLTAQFSPPVTGITRSLRDTKPSLSNLRVFPVYTEIR), are a transit peptide targeting the chloroplast. The interval 60 to 87 (RDTAGSESESEATPSPAEESGSGEDKEV) is disordered. Positions 64–79 (GSESESEATPSPAEES) are enriched in low complexity. The chain crosses the membrane as a helical span at residues 140–160 (VVLGVIAGSSVVLLTVNFLLA).

The protein belongs to the SecE/SEC61-gamma family. In terms of assembly, part of the Sec protein translocation apparatus. Interacts with SCY1 and ALB3.

The protein localises to the plastid. It localises to the chloroplast thylakoid membrane. Functionally, involved in the import/insertion pathway in the thylakoids. The signal recognition particle is not involved in the insertion of SECE1 in the thylakoid membrane. This is Preprotein translocase subunit SECE1 (SECE1) from Arabidopsis thaliana (Mouse-ear cress).